Here is a 213-residue protein sequence, read N- to C-terminus: ATP synthase peripheral stalk subunit OSCP, mitochondrial (213 aa).

A mitochondrion-targeting transit peptide spans 1-23; it reads MAAPAVSGFSRQVRCFSTSVVRP. Residues 5-23 carry the SIFI-degron motif; the sequence is AVSGFSRQVRCFSTSVVRP. An N6-acetyllysine mark is found at Lys-54, Lys-60, Lys-70, and Lys-73. An N6-succinyllysine modification is found at Lys-90. An N6-acetyllysine; alternate mark is found at Lys-100 and Lys-158. N6-succinyllysine; alternate occurs at positions 100 and 158. 3 positions are modified to N6-acetyllysine: Lys-172, Lys-176, and Lys-192. Residue Lys-199 is modified to N6-succinyllysine.

The protein belongs to the ATPase delta chain family. In terms of assembly, component of the ATP synthase complex composed at least of ATP5F1A/subunit alpha, ATP5F1B/subunit beta, ATP5MC1/subunit c (homooctomer), MT-ATP6/subunit a, MT-ATP8/subunit 8, ATP5ME/subunit e, ATP5MF/subunit f, ATP5MG/subunit g, ATP5MK/subunit k, ATP5MJ/subunit j, ATP5F1C/subunit gamma, ATP5F1D/subunit delta, ATP5F1E/subunit epsilon, ATP5PF/subunit F6, ATP5PB/subunit b, ATP5PD/subunit d, ATP5PO/subunit OSCP. ATP synthase complex consists of a soluble F(1) head domain (subunits alpha(3) and beta(3)) - the catalytic core - and a membrane F(0) domain - the membrane proton channel (subunits c, a, 8, e, f, g, k and j). These two domains are linked by a central stalk (subunits gamma, delta, and epsilon) rotating inside the F1 region and a stationary peripheral stalk (subunits F6, b, d, and OSCP). In response to mitochondrial stress, the precursor protein is ubiquitinated by the SIFI complex in the cytoplasm before mitochondrial import, leading to its degradation. Within the SIFI complex, UBR4 initiates ubiquitin chain that are further elongated or branched by KCMF1.

Its subcellular location is the mitochondrion. The protein resides in the mitochondrion inner membrane. Subunit OSCP, of the mitochondrial membrane ATP synthase complex (F(1)F(0) ATP synthase or Complex V) that produces ATP from ADP in the presence of a proton gradient across the membrane which is generated by electron transport complexes of the respiratory chain. ATP synthase complex consist of a soluble F(1) head domain - the catalytic core - and a membrane F(1) domain - the membrane proton channel. These two domains are linked by a central stalk rotating inside the F(1) region and a stationary peripheral stalk. During catalysis, ATP synthesis in the catalytic domain of F(1) is coupled via a rotary mechanism of the central stalk subunits to proton translocation. In vivo, can only synthesize ATP although its ATP hydrolase activity can be activated artificially in vitro. Part of the complex F(0) domain. Part of the complex F(0) domain and the peripheric stalk, which acts as a stator to hold the catalytic alpha(3)beta(3) subcomplex and subunit a/ATP6 static relative to the rotary elements. In Rhinolophus ferrumequinum (Greater horseshoe bat), this protein is ATP synthase peripheral stalk subunit OSCP, mitochondrial.